We begin with the raw amino-acid sequence, 144 residues long: uncharacterized protein (144 aa).

Transmembrane regions (helical) follow at residues Leu-76 to Leu-96 and Ile-105 to Tyr-125.

The protein belongs to the RseC family.

Its subcellular location is the cell inner membrane. This is an uncharacterized protein from Haemophilus influenzae (strain ATCC 51907 / DSM 11121 / KW20 / Rd).